A 729-amino-acid polypeptide reads, in one-letter code: Glycine--tRNA ligase, mitochondrial 1 (729 aa).

An N-acetylmethionine modification is found at M1. Residues 1-28 (MRIFSTFVFHRRQQIFNLRQFQTTTILR) constitute a mitochondrion transit peptide. Residues 50-106 (SLSEKSSSVEAQGNAVRALKASRAAKPEIDAAIEQLNKLKLEKSTVEKELQSIISSS) enclose the WHEP-TRS domain. E296 is a glycine binding site. ATP-binding positions include 328 to 330 (RNE) and 339 to 340 (RV). E347 provides a ligand contact to glycine. 454–455 (EC) is a binding site for ATP. 575–577 (EPS) lines the glycine pocket. R582 contributes to the ATP binding site.

The protein belongs to the class-II aminoacyl-tRNA synthetase family. Homodimer.

Its subcellular location is the mitochondrion. The protein resides in the cytoplasm. The protein localises to the cytosol. The enzyme catalyses tRNA(Gly) + glycine + ATP = glycyl-tRNA(Gly) + AMP + diphosphate. The catalysed reaction is 2 ATP + H(+) = P(1),P(4)-bis(5'-adenosyl) tetraphosphate + diphosphate. Functionally, catalyzes the ATP-dependent ligation of glycine to the 3'-end of its cognate tRNA, via the formation of an aminoacyl-adenylate intermediate (Gly-AMP). Also produces diadenosine tetraphosphate (Ap4A), a universal pleiotropic signaling molecule needed for cell regulation pathways, by direct condensation of 2 ATPs. Thereby, may play a special role in Ap4A homeostasis. The polypeptide is Glycine--tRNA ligase, mitochondrial 1 (Arabidopsis thaliana (Mouse-ear cress)).